The sequence spans 87 residues: MKTFDDLFAELSEKAATRPEGSGTVRELDAGVHSIGKKIVEEAAEVWMAAEHESDEAFAEEASQLIYHLQVMMLAKGLTLADVYRHL.

This sequence belongs to the PRA-PH family.

The protein resides in the cytoplasm. The catalysed reaction is 1-(5-phospho-beta-D-ribosyl)-ATP + H2O = 1-(5-phospho-beta-D-ribosyl)-5'-AMP + diphosphate + H(+). It functions in the pathway amino-acid biosynthesis; L-histidine biosynthesis; L-histidine from 5-phospho-alpha-D-ribose 1-diphosphate: step 2/9. The sequence is that of Phosphoribosyl-ATP pyrophosphatase from Leifsonia xyli subsp. xyli (strain CTCB07).